Here is an 843-residue protein sequence, read N- to C-terminus: MELWRQCTHWLIQCRVLPPSHRVTWEGAQVCELAQALRDGVLLCQLLNNLLPHAINLREVNLRPQMSQFLCLKNIRTFLSTCCEKFGLKRSELFEAFDLFDVQDFGKVIYTLSALSWTPIAQNKGIMPFPTEDSALGDEDIYSGLSDQIDDTAEEDEDLYDCVENEEAEGDEIYEDLMRSESVPTPPKMTEYDKRCCCLREIQQTEEKYTDTLGSIQQHFMKPLQRFLKPQDMETIFVNIEELLSVHTHFLKELKDALSGPGATMLYQVFIKYKERFLVYGRYCSQVESAIKHLDQVATAREDVQMKLEECSQRANNGRFTLRDLLMVPMQRVLKYHLLLQELVKHTQDTTEKENLRLALDAMRDLAQCVNEVKRDNETLRQITNFQLSIENLDQSLANYGRPKIDGELKITSVERRSKTDRYAFLLDKALLICKRRGDSYDLKASVNLHSFQVRDDSSGERDNKKWSHMFLLIEDQGAQGYELFFKTRELKKKWMEQFEMAISNIYPENATANGHDFQMFSFEETTSCKACQMLLRGTFYQGYRCYRCRAPAHKECLGRVPPCGRQDFSGTMKKDKLHRRAQDKKRNELGLPKMEVCQEYYGIPPPPGAFGPFLRLNPGDIVELTKAEAEHTWWEGRNTATNEVGWFPCNRVRPYVHGPPQDLSVHLWYAGPMERAGAEGILTNRSDGTYLVRQRVKDTAEFAISIKYNVEVKHIKIMTSEGLYRITEKKAFRGLPELVEFYQQNSLKDCFKSLDTTLQFPYKEPERRAINKPPVGSTKYFGTAKARYDFCARDRSELSLKEGDIIKILNKKGQQGWWRGEIYGRIGWFPSNYVEEDYSEYC.

The Calponin-homology (CH) domain maps to 1–119 (MELWRQCTHW…YTLSALSWTP (119 aa)). The region spanning 194–373 (KRCCCLREIQ…RDLAQCVNEV (180 aa)) is the DH domain. The PH domain occupies 402–504 (RPKIDGELKI…WMEQFEMAIS (103 aa)). Residues 515-564 (GHDFQMFSFEETTSCKACQMLLRGTFYQGYRCYRCRAPAHKECLGRVPPC) form a Phorbol-ester/DAG-type zinc finger. An SH3 1 domain is found at 590–658 (LGLPKMEVCQ…PCNRVRPYVH (69 aa)). Residues 669-763 (WYAGPMERAG…SLDTTLQFPY (95 aa)) form the SH2 domain. Residues 780 to 840 (KYFGTAKARY…PSNYVEEDYS (61 aa)) enclose the SH3 2 domain. Residues Tyr-824 and Tyr-842 each carry the phosphotyrosine modification.

As to quaternary structure, interacts with SHB. Interacts with APS, DOCK2, GRB2, GRB3, DOCK2, SLA, TEC and ZNF655/VIK. Interacts with SIAH2; without leading to its degradation. Associates with BLNK, PLCG1, GRB2 and NCK1 in a B-cell antigen receptor-dependent fashion. Interacts with CBLB; which inhibits tyrosine phosphorylation and down-regulates activity. May interact with CCPG1. Interacts with CLNK. Interacts with THEMIS2. Interacts with NEK3 and this interaction is prolactin-dependent. Interacts with ITK. Interacts with PTK2B/PYK2. Interacts with HCK. Interacts with PTK2B/PYK2. Interacts (via SH2 domain) with SYK. Interacts with ANKRD54. Interacts with CD6. Interacts with LCP2; this interaction plays a role in TCR-mediated cytokine production. In terms of processing, phosphorylated by FYN. Phosphorylated on tyrosine residues by HCK in response to IFNG and bacterial lipopolysaccharide (LPS).

Its function is as follows. Couples tyrosine kinase signals with the activation of the Rho/Rac GTPases, thus leading to cell differentiation and/or proliferation. This Rattus norvegicus (Rat) protein is Proto-oncogene vav (Vav1).